We begin with the raw amino-acid sequence, 368 residues long: uncharacterized protein (368 aa).

Residues 156–182 (SNVNAHNNNNNSNNNNNNNNNSNNNNN) are compositionally biased toward low complexity. 3 disordered regions span residues 156-213 (SNVN…SSPY), 228-259 (ASTNLSSSSSNNSMHTNPTTATSTSADLINDL), and 291-319 (STTSSSIGTNINPPQHSPSPSQREDFSTA). The segment covering 183–194 (LYNQTQFSTRYF) has biased composition (polar residues). 2 stretches are compositionally biased toward low complexity: residues 195–213 (NSNSSPSLTSSTSNSSSPY) and 228–240 (ASTNLSSSSSNNS). Polar residues-rich tracts occupy residues 241 to 254 (MHTNPTTATSTSAD) and 297 to 311 (IGTNINPPQHSPSPS).

This is an uncharacterized protein from Saccharomyces cerevisiae (strain ATCC 204508 / S288c) (Baker's yeast).